Consider the following 84-residue polypeptide: Small ribosomal subunit protein bS18 (84 aa).

The protein belongs to the bacterial ribosomal protein bS18 family. In terms of assembly, part of the 30S ribosomal subunit. Forms a tight heterodimer with protein bS6.

Binds as a heterodimer with protein bS6 to the central domain of the 16S rRNA, where it helps stabilize the platform of the 30S subunit. In Mycobacterium sp. (strain JLS), this protein is Small ribosomal subunit protein bS18.